Reading from the N-terminus, the 231-residue chain is Putative cobalt transport protein CbiM 1 (231 aa).

Transmembrane regions (helical) follow at residues 6–26 (GFLP…FLIY), 41–61 (VLPL…VDIP), 79–99 (FFGP…QALL), 107–127 (TLGA…WLVF), 136–156 (VPLG…TYLI), and 172–192 (LTAF…ISII).

This sequence belongs to the CbiM family. In terms of assembly, forms an energy-coupling factor (ECF) transporter complex composed of an ATP-binding protein (A component, CbiO), a transmembrane protein (T component, CbiQ) and 2 possible substrate-capture proteins (S components, CbiM and CbiN) of unknown stoichimetry.

The protein localises to the cell membrane. It participates in cofactor biosynthesis; adenosylcobalamin biosynthesis. Its function is as follows. Part of the energy-coupling factor (ECF) transporter complex CbiMNOQ involved in cobalt import. The protein is Putative cobalt transport protein CbiM 1 of Methanocorpusculum labreanum (strain ATCC 43576 / DSM 4855 / Z).